We begin with the raw amino-acid sequence, 147 residues long: Large ribosomal subunit protein uL13 (147 aa).

It belongs to the universal ribosomal protein uL13 family. As to quaternary structure, part of the 50S ribosomal subunit.

This protein is one of the early assembly proteins of the 50S ribosomal subunit, although it is not seen to bind rRNA by itself. It is important during the early stages of 50S assembly. This Latilactobacillus sakei subsp. sakei (strain 23K) (Lactobacillus sakei subsp. sakei) protein is Large ribosomal subunit protein uL13.